A 248-amino-acid chain; its full sequence is Protein canopy homolog 4 (248 aa).

Residues 1 to 21 (MGPVRLGILLFLFLAVHEAWA) form the signal peptide. Intrachain disulfides connect C38/C196, C41/C184, and C94/C156. A disordered region spans residues 200-248 (TWTGKEITDGEEKTEGEEEQEEEEEEEEEEGGDKMTKTGSHPKLDREDL). Over residues 213 to 230 (TEGEEEQEEEEEEEEEEG) the composition is skewed to acidic residues. Residues 231-248 (GDKMTKTGSHPKLDREDL) show a composition bias toward basic and acidic residues.

This sequence belongs to the canopy family. As to quaternary structure, interacts with TLR4.

It is found in the secreted. In terms of biological role, plays a role in the regulation of the cell surface expression of TLR4. The polypeptide is Protein canopy homolog 4 (CNPY4) (Homo sapiens (Human)).